Here is a 400-residue protein sequence, read N- to C-terminus: Acetate kinase (400 aa).

N10 contributes to the Mg(2+) binding site. K17 contacts ATP. R91 is a substrate binding site. D150 (proton donor/acceptor) is an active-site residue. Residues 210 to 214, 285 to 287, and 333 to 337 each bind ATP; these read HLGNG, DCR, and GIGEN. Residue E387 coordinates Mg(2+).

The protein belongs to the acetokinase family. Homodimer. The cofactor is Mg(2+). Mn(2+) is required as a cofactor.

Its subcellular location is the cytoplasm. The catalysed reaction is acetate + ATP = acetyl phosphate + ADP. It functions in the pathway metabolic intermediate biosynthesis; acetyl-CoA biosynthesis; acetyl-CoA from acetate: step 1/2. Functionally, catalyzes the formation of acetyl phosphate from acetate and ATP. Can also catalyze the reverse reaction. The polypeptide is Acetate kinase (Escherichia coli O157:H7).